The primary structure comprises 458 residues: Nuclear transcription factor Y subunit gamma (458 aa).

Low complexity predominate over residues 305–315; the sequence is QQQFSQFTDGQ. The tract at residues 305 to 379 is disordered; the sequence is QQQFSQFTDG…QQSSTSPPPS (75 aa). The segment covering 339 to 351 has biased composition (polar residues); the sequence is TGNSTPCTSSLPT.

The protein belongs to the NFYC/HAP5 subunit family. As to quaternary structure, heterotrimeric transcription factor composed of three components, NF-YA, NF-YB and NF-YC. NF-YB and NF-YC must interact and dimerize for NF-YA association and DNA binding.

The protein resides in the nucleus. Its function is as follows. Component of the sequence-specific heterotrimeric transcription factor (NF-Y) which specifically recognizes a 5'-CCAAT-3' box motif found in the promoters of its target genes. NF-Y can function as both an activator and a repressor, depending on its interacting cofactors. This chain is Nuclear transcription factor Y subunit gamma (NFYC), found in Homo sapiens (Human).